The primary structure comprises 201 residues: Dephospho-CoA kinase (201 aa).

The region spanning 4-201 (SVGLTGNIAS…KYLREAKIKQ (198 aa)) is the DPCK domain. 12–17 (ASGKST) provides a ligand contact to ATP.

This sequence belongs to the CoaE family.

The protein localises to the cytoplasm. It carries out the reaction 3'-dephospho-CoA + ATP = ADP + CoA + H(+). It participates in cofactor biosynthesis; coenzyme A biosynthesis; CoA from (R)-pantothenate: step 5/5. Functionally, catalyzes the phosphorylation of the 3'-hydroxyl group of dephosphocoenzyme A to form coenzyme A. In Legionella pneumophila subsp. pneumophila (strain Philadelphia 1 / ATCC 33152 / DSM 7513), this protein is Dephospho-CoA kinase.